The primary structure comprises 380 residues: Succinyl-diaminopimelate desuccinylase (380 aa).

A Zn(2+)-binding site is contributed by H69. The active site involves D71. Residue D102 participates in Zn(2+) binding. Residue E136 is the Proton acceptor of the active site. Residues E137, E165, and H351 each contribute to the Zn(2+) site.

The protein belongs to the peptidase M20A family. DapE subfamily. In terms of assembly, homodimer. The cofactor is Zn(2+). Co(2+) serves as cofactor.

It catalyses the reaction N-succinyl-(2S,6S)-2,6-diaminopimelate + H2O = (2S,6S)-2,6-diaminopimelate + succinate. Its pathway is amino-acid biosynthesis; L-lysine biosynthesis via DAP pathway; LL-2,6-diaminopimelate from (S)-tetrahydrodipicolinate (succinylase route): step 3/3. Functionally, catalyzes the hydrolysis of N-succinyl-L,L-diaminopimelic acid (SDAP), forming succinate and LL-2,6-diaminopimelate (DAP), an intermediate involved in the bacterial biosynthesis of lysine and meso-diaminopimelic acid, an essential component of bacterial cell walls. In Bordetella petrii (strain ATCC BAA-461 / DSM 12804 / CCUG 43448), this protein is Succinyl-diaminopimelate desuccinylase.